The sequence spans 226 residues: UPF0111 protein AF_1799 (226 aa).

This sequence belongs to the UPF0111 family.

This is UPF0111 protein AF_1799 from Archaeoglobus fulgidus (strain ATCC 49558 / DSM 4304 / JCM 9628 / NBRC 100126 / VC-16).